The sequence spans 413 residues: Serine hydroxymethyltransferase (413 aa).

(6S)-5,6,7,8-tetrahydrofolate contacts are provided by residues L117 and 121 to 123; that span reads GHL. Position 226 is an N6-(pyridoxal phosphate)lysine (K226). 349–351 provides a ligand contact to (6S)-5,6,7,8-tetrahydrofolate; the sequence is SPF.

This sequence belongs to the SHMT family. Homodimer. It depends on pyridoxal 5'-phosphate as a cofactor.

The protein resides in the cytoplasm. It carries out the reaction (6R)-5,10-methylene-5,6,7,8-tetrahydrofolate + glycine + H2O = (6S)-5,6,7,8-tetrahydrofolate + L-serine. The protein operates within one-carbon metabolism; tetrahydrofolate interconversion. It functions in the pathway amino-acid biosynthesis; glycine biosynthesis; glycine from L-serine: step 1/1. Functionally, catalyzes the reversible interconversion of serine and glycine with tetrahydrofolate (THF) serving as the one-carbon carrier. This reaction serves as the major source of one-carbon groups required for the biosynthesis of purines, thymidylate, methionine, and other important biomolecules. Also exhibits THF-independent aldolase activity toward beta-hydroxyamino acids, producing glycine and aldehydes, via a retro-aldol mechanism. The polypeptide is Serine hydroxymethyltransferase (Listeria monocytogenes serotype 4b (strain F2365)).